Here is a 105-residue protein sequence, read N- to C-terminus: UPF0145 protein lpp0255 (105 aa).

Belongs to the UPF0145 family.

The polypeptide is UPF0145 protein lpp0255 (Legionella pneumophila (strain Paris)).